The following is a 127-amino-acid chain: Aspartate 1-decarboxylase (127 aa).

The active-site Schiff-base intermediate with substrate; via pyruvic acid is Ser25. Ser25 is modified (pyruvic acid (Ser)). Thr57 is a binding site for substrate. Tyr58 serves as the catalytic Proton donor. Gly73 to Ala75 contacts substrate.

Belongs to the PanD family. In terms of assembly, heterooctamer of four alpha and four beta subunits. Pyruvate is required as a cofactor. Is synthesized initially as an inactive proenzyme, which is activated by self-cleavage at a specific serine bond to produce a beta-subunit with a hydroxyl group at its C-terminus and an alpha-subunit with a pyruvoyl group at its N-terminus.

The protein localises to the cytoplasm. The catalysed reaction is L-aspartate + H(+) = beta-alanine + CO2. The protein operates within cofactor biosynthesis; (R)-pantothenate biosynthesis; beta-alanine from L-aspartate: step 1/1. Functionally, catalyzes the pyruvoyl-dependent decarboxylation of aspartate to produce beta-alanine. The sequence is that of Aspartate 1-decarboxylase from Desulfitobacterium hafniense (strain DSM 10664 / DCB-2).